We begin with the raw amino-acid sequence, 874 residues long: Chaperone protein ClpB 1 (874 aa).

The Clp R domain maps to 6-148 (PNQFTEKAWE…RQIIQQIRGS (143 aa)). Repeat stretches follow at residues 9–73 (FTEK…IARQ) and 85–148 (LGRS…IRGS). The segment at 161–342 (EALEKYGRDL…RRFQQVFVDQ (182 aa)) is NBD1. 208–215 (GEPGVGKT) provides a ligand contact to ATP. A linker region spans residues 343–551 (PTVEDTISIL…IAEIISKWTG (209 aa)). Residues 393-527 (IDLVDESAAR…MEGGLATTHT (135 aa)) are a coiled coil. Positions 561-772 (EMQKLLNLDE…RVDETIIFHS (212 aa)) are NBD2. 611-618 (GPTGVGKT) is an ATP binding site. The interval 773 to 874 (LRKDQLQQIV…IATPTAVPLS (102 aa)) is C-terminal.

It belongs to the ClpA/ClpB family. In terms of assembly, homohexamer. The oligomerization is ATP-dependent.

The protein resides in the cytoplasm. In terms of biological role, part of a stress-induced multi-chaperone system, it is involved in the recovery of the cell from heat-induced damage, in cooperation with DnaK, DnaJ and GrpE. Acts before DnaK, in the processing of protein aggregates. Protein binding stimulates the ATPase activity; ATP hydrolysis unfolds the denatured protein aggregates, which probably helps expose new hydrophobic binding sites on the surface of ClpB-bound aggregates, contributing to the solubilization and refolding of denatured protein aggregates by DnaK. Necessary for thermotolerance. The sequence is that of Chaperone protein ClpB 1 (clpB1) from Synechococcus elongatus (strain ATCC 33912 / PCC 7942 / FACHB-805) (Anacystis nidulans R2).